The chain runs to 124 residues: Small ribosomal subunit protein uS12 (124 aa).

Positions 9 to 28 (RTERQTLSRKTKSPALRSCP) are disordered. At D89 the chain carries 3-methylthioaspartic acid. The tract at residues 104-124 (TAGVKDRRQSRSKYGAKAPKE) is disordered.

This sequence belongs to the universal ribosomal protein uS12 family. As to quaternary structure, part of the 30S ribosomal subunit. Contacts proteins S8 and S17. May interact with IF1 in the 30S initiation complex.

Its function is as follows. With S4 and S5 plays an important role in translational accuracy. In terms of biological role, interacts with and stabilizes bases of the 16S rRNA that are involved in tRNA selection in the A site and with the mRNA backbone. Located at the interface of the 30S and 50S subunits, it traverses the body of the 30S subunit contacting proteins on the other side and probably holding the rRNA structure together. The combined cluster of proteins S8, S12 and S17 appears to hold together the shoulder and platform of the 30S subunit. The sequence is that of Small ribosomal subunit protein uS12 from Synechococcus sp. (strain RCC307).